The sequence spans 304 residues: Ribonuclease Z (304 aa).

Residues His63, His65, Asp67, His68, His141, Asp208, and His266 each coordinate Zn(2+). Asp67 functions as the Proton acceptor in the catalytic mechanism.

This sequence belongs to the RNase Z family. In terms of assembly, homodimer. It depends on Zn(2+) as a cofactor.

The enzyme catalyses Endonucleolytic cleavage of RNA, removing extra 3' nucleotides from tRNA precursor, generating 3' termini of tRNAs. A 3'-hydroxy group is left at the tRNA terminus and a 5'-phosphoryl group is left at the trailer molecule.. Zinc phosphodiesterase, which displays some tRNA 3'-processing endonuclease activity. Probably involved in tRNA maturation, by removing a 3'-trailer from precursor tRNA. The chain is Ribonuclease Z from Chlamydia trachomatis serovar L2 (strain ATCC VR-902B / DSM 19102 / 434/Bu).